Reading from the N-terminus, the 149-residue chain is Protein-export protein SecB (149 aa).

The protein belongs to the SecB family. Homotetramer, a dimer of dimers. One homotetramer interacts with 1 SecA dimer.

It is found in the cytoplasm. In terms of biological role, one of the proteins required for the normal export of preproteins out of the cell cytoplasm. It is a molecular chaperone that binds to a subset of precursor proteins, maintaining them in a translocation-competent state. It also specifically binds to its receptor SecA. In Hydrogenovibrio crunogenus (strain DSM 25203 / XCL-2) (Thiomicrospira crunogena), this protein is Protein-export protein SecB.